The sequence spans 625 residues: Dopamine beta-hydroxylase (625 aa).

Residues 1–9 (MQVPSPSAR) are Cytoplasmic-facing. A helical; Signal-anchor for type II membrane protein transmembrane segment spans residues 10–30 (EAASMYGTAVAVFLVLLVAVL). Topologically, residues 31–625 (QGLAPPESPL…TVVNIGGGKV (595 aa)) are intragranular. The DOMON domain occupies 50-166 (GDLELSWDVS…GTVHLVYGVL (117 aa)). 6 disulfides stabilise this stretch: C147-C604, C224-C275, C261-C287, C382-C495, C386-C573, and C458-C480. An N-linked (GlcNAc...) asparagine glycan is attached at N177. The active site involves Y222. Residues H254 and H255 each coordinate Cu(2+). A glycan (N-linked (GlcNAc...) asparagine) is linked at N315. The Cu(2+) site is built by H325, H404, H406, and M479. The active site involves H404. N574 carries an N-linked (GlcNAc...) asparagine glycan.

Belongs to the copper type II ascorbate-dependent monooxygenase family. In terms of assembly, homotetramer; composed of two disulfide-linked dimers. Cu(2+) is required as a cofactor. Proteolytic cleavage after the membrane-anchor leads to the release of the soluble form. Post-translationally, N-glycosylated.

Its subcellular location is the cytoplasmic vesicle. It is found in the secretory vesicle lumen. It localises to the secretory vesicle. The protein localises to the chromaffin granule lumen. The protein resides in the secreted. Its subcellular location is the secretory vesicle membrane. It is found in the chromaffin granule membrane. The catalysed reaction is dopamine + 2 L-ascorbate + O2 = (R)-noradrenaline + 2 monodehydro-L-ascorbate radical + H2O. The protein operates within catecholamine biosynthesis; (R)-noradrenaline biosynthesis; (R)-noradrenaline from dopamine: step 1/1. Functionally, catalyzes the hydroxylation of dopamine to noradrenaline (also known as norepinephrine), and is thus vital for regulation of these neurotransmitters. The sequence is that of Dopamine beta-hydroxylase (DBH) from Canis lupus familiaris (Dog).